Here is a 303-residue protein sequence, read N- to C-terminus: T-box protein 38 (303 aa).

The T-box DNA-binding region spans 14-195; the sequence is LSTPEIWEEF…HNKFASGFRS (182 aa). The segment at 193-225 is disordered; that stretch reads FRSNGKRRLSSDSENSENSPPKRSKLVTPPTIS. Residues 204-213 show a composition bias toward low complexity; that stretch reads DSENSENSPP.

The protein resides in the nucleus. In terms of biological role, transcription factor. Required for mesodermal induction, acting redundantly with transcription factor tbx-37. Together with tbx-37, acts by inducing cell fates in the AB lineage, thereby playing a role in development of the anterior pharynx. The chain is T-box protein 38 (tbx-38) from Caenorhabditis elegans.